A 520-amino-acid chain; its full sequence is 2-isopropylmalate synthase (520 aa).

Residues I12–V274 enclose the Pyruvate carboxyltransferase domain. Mn(2+) is bound by residues D21, H209, H211, and N245. The segment at R396 to A520 is regulatory domain.

Belongs to the alpha-IPM synthase/homocitrate synthase family. LeuA type 1 subfamily. In terms of assembly, homodimer. The cofactor is Mn(2+).

It localises to the cytoplasm. It carries out the reaction 3-methyl-2-oxobutanoate + acetyl-CoA + H2O = (2S)-2-isopropylmalate + CoA + H(+). It functions in the pathway amino-acid biosynthesis; L-leucine biosynthesis; L-leucine from 3-methyl-2-oxobutanoate: step 1/4. Its function is as follows. Catalyzes the condensation of the acetyl group of acetyl-CoA with 3-methyl-2-oxobutanoate (2-ketoisovalerate) to form 3-carboxy-3-hydroxy-4-methylpentanoate (2-isopropylmalate). The sequence is that of 2-isopropylmalate synthase from Xanthomonas axonopodis pv. citri (strain 306).